The following is a 269-amino-acid chain: Phosphatidylglycerol--prolipoprotein diacylglyceryl transferase (269 aa).

The next 7 membrane-spanning stretches (helical) occupy residues 17-37, 56-76, 92-112, 120-140, 174-194, 202-222, and 237-257; these read LKIH…WLLA, LVFW…VLFY, WKGG…ALWF, FFEL…AGRI, PSQL…LWLY, MAVS…VEFV, and LTMG…LIWL. R139 is a binding site for a 1,2-diacyl-sn-glycero-3-phospho-(1'-sn-glycerol).

This sequence belongs to the Lgt family.

It localises to the cell inner membrane. It catalyses the reaction L-cysteinyl-[prolipoprotein] + a 1,2-diacyl-sn-glycero-3-phospho-(1'-sn-glycerol) = an S-1,2-diacyl-sn-glyceryl-L-cysteinyl-[prolipoprotein] + sn-glycerol 1-phosphate + H(+). It functions in the pathway protein modification; lipoprotein biosynthesis (diacylglyceryl transfer). In terms of biological role, catalyzes the transfer of the diacylglyceryl group from phosphatidylglycerol to the sulfhydryl group of the N-terminal cysteine of a prolipoprotein, the first step in the formation of mature lipoproteins. The polypeptide is Phosphatidylglycerol--prolipoprotein diacylglyceryl transferase (Pseudomonas entomophila (strain L48)).